A 175-amino-acid chain; its full sequence is NADH-ubiquinone oxidoreductase chain 6 (175 aa).

Transmembrane regions (helical) follow at residues 1–21 (MMYI…GFSS), 25–45 (PVYG…IIMG), 51–71 (LGLV…GYTI), 87–107 (VVLG…MWLF), 112–132 (ELVG…EGGF), and 148–168 (YGFW…FIAI).

This sequence belongs to the complex I subunit 6 family. In terms of assembly, core subunit of respiratory chain NADH dehydrogenase (Complex I) which is composed of 45 different subunits.

The protein resides in the mitochondrion inner membrane. The catalysed reaction is a ubiquinone + NADH + 5 H(+)(in) = a ubiquinol + NAD(+) + 4 H(+)(out). In terms of biological role, core subunit of the mitochondrial membrane respiratory chain NADH dehydrogenase (Complex I) which catalyzes electron transfer from NADH through the respiratory chain, using ubiquinone as an electron acceptor. Essential for the catalytic activity and assembly of complex I. In Loxodonta africana (African elephant), this protein is NADH-ubiquinone oxidoreductase chain 6 (MT-ND6).